Reading from the N-terminus, the 635-residue chain is S-type anion channel SLAH3 (635 aa).

Residues 1–253 (MEEKPNYVIQ…IVLPNDKKWP (253 aa)) are Cytoplasmic-facing. The segment covering 102–121 (SDPTTSLSSENHKNSGSTGK) has biased composition (polar residues). Residues 102-173 (SDPTTSLSSE…SGHHQNQNQA (72 aa)) form a disordered region. Positions 153–165 (NHHHHLHRQHQSG) are enriched in basic residues. Phosphoserine is present on serine 189. Positions 193-217 (ERQFTRKPASVEPEAPNRNNQNLNT) are disordered. Residues 254–276 (FLLRYPISTFGMCLGVSSQAIMW) traverse the membrane as a helical segment. Topologically, residues 277–299 (KTLATAEPTKFLHVPLWINQGLW) are extracellular. A helical membrane pass occupies residues 300-320 (FISVALILTIATIYLLKIILF). Over 321–335 (FEAVRREYYHPIRIN) the chain is Cytoplasmic. A helical transmembrane segment spans residues 336 to 356 (FFFAPFISLLFLALGVPPSII). Over 357 to 358 (TD) the chain is Extracellular. The helical transmembrane segment at 359 to 379 (LPHFLWYLLMFPFICLELKIY) threads the bilayer. Residues 380–396 (GQWMSGGQRRLSRVANP) lie on the Cytoplasmic side of the membrane. A helical membrane pass occupies residues 397-417 (TNHLSVVGNFVGALLGASMGL). The Extracellular segment spans residues 418–419 (RE). Residues 420-440 (GPIFFYAVGMAHYLVLFVTLY) traverse the membrane as a helical segment. Over 441–455 (QRLPTNETLPKDLHP) the chain is Cytoplasmic. A helical transmembrane segment spans residues 456 to 476 (VFFLFVAAPSVASMAWAKVTG). Position 477 (serine 477) is a topological domain, extracellular. A helical membrane pass occupies residues 478 to 498 (FDYGSKVCYFIAIFLYFSLAV). The Cytoplasmic portion of the chain corresponds to 499–504 (RINFFR). The chain crosses the membrane as a helical span at residues 505 to 525 (GIKFSLSWWAYTFPMTGAAIA). Residues 526 to 541 (TIRYATVVKSTMTQIM) lie on the Extracellular side of the membrane. The chain crosses the membrane as a helical span at residues 542–562 (CVVLCAIATLVVFALLVTTII). Residues 563 to 635 (HAFVLRDLFP…NGKTQESDSS (73 aa)) are Cytoplasmic-facing. A disordered region spans residues 611–635 (FTDSDSSQSNDVEACNGKTQESDSS). A compositionally biased stretch (polar residues) spans 614 to 635 (SDSSQSNDVEACNGKTQESDSS).

It belongs to the SLAC1 S-type anion channel family. In terms of assembly, homotrimer. Interacts with KAT1. In terms of tissue distribution, expressed in the whole plant, escpecially in vascular systems.

The protein localises to the cell membrane. Slow, weak voltage-dependent S-type anion efflux channel involved in maintenance of anion homeostasis. Binds to the highly selective inward-rectifying potassium channel KAT1 and inhibits its activity. Functions as an essential negative regulator of inward potassium channels in guard cells. Essential for the efficient stomatal closure and opening in guard cells. The chain is S-type anion channel SLAH3 (SLAH3) from Arabidopsis thaliana (Mouse-ear cress).